The sequence spans 634 residues: Sodium-dependent neutral amino acid transporter B(0)AT1 (634 aa).

The Cytoplasmic portion of the chain corresponds to 1–41 (MVRLVLPNPGLEDRIPSLDELEVIEKEEASSRPKWDNKAQY). Position 17 is a phosphoserine (Ser-17). The chain crosses the membrane as a helical span at residues 42–62 (MLTCVGFCVGLGNVWRFPYLC). Over 63-65 (QSH) the chain is Extracellular. Residues 66 to 86 (GGGAFMIPFLILLVLEGIPLL) form a helical membrane-spanning segment. The Cytoplasmic segment spans residues 87-119 (HLEFAIGQRLRKGSVGVWSSIHPALKGVGIASM). Residues 120–140 (FVSFMVGLYYNTIIAWVMWYF) form a helical membrane-spanning segment. At 141-192 (FNSFQEPLPWSECPLNQNQTGYVEECAKSSSVDYFWYRETLNISTSISDSGS) the chain is on the extracellular side. Asn-158 and Asn-182 each carry an N-linked (GlcNAc...) asparagine glycan. Residues 193 to 213 (IQWWILLCLTCAWSVLYVCTI) form a helical membrane-spanning segment. Residues 214–221 (RGIETTGK) lie on the Cytoplasmic side of the membrane. A helical transmembrane segment spans residues 222–242 (AVYITSTLPYVVLTIFLIRGL). The Extracellular portion of the chain corresponds to 243–268 (TLKGATNGIVFLFTPNITELSNPNTW). N-linked (GlcNAc...) asparagine glycosylation occurs at Asn-258. A helical membrane pass occupies residues 269–289 (LDAGAQVFYSFSLAFGGLISF). Topologically, residues 290–304 (SSYNSVHNNCEMDSV) are cytoplasmic. Residues 305 to 325 (IVSIINGFTSVYAATVVYSII) form a helical membrane-spanning segment. Residues 326 to 413 (GFRATERFDD…TEAITKMPVS (88 aa)) lie on the Extracellular side of the membrane. N-linked (GlcNAc...) asparagine glycans are attached at residues Asn-354 and Asn-368. The chain crosses the membrane as a helical span at residues 414 to 434 (PLWSVLFFIMLFCLGLSSMFG). Residues 435 to 456 (NMEGVVVPLQDLNITPKKWPKE) lie on the Cytoplasmic side of the membrane. The chain crosses the membrane as a helical span at residues 457–477 (LLTGLICLGTYLIAFIFTLNS). Over 478–490 (GQYWLSLLDSYAG) the chain is Extracellular. Residues 491-511 (SIPLLIIAFCEMFAVVYVYGV) traverse the membrane as a helical segment. At 512 to 531 (DRFNKDIEFMIGHKPNIFWQ) the chain is on the cytoplasmic side. Residues 532–552 (VTWRVVSPLIMLVIFLFFFVI) form a helical membrane-spanning segment. Residues 553-581 (EVNKQLMYSVWDPDYEEFPKSQKVPYPDW) lie on the Extracellular side of the membrane. Residues 582–602 (VYAVVVIVAGVPCLTIPCFAI) form a helical membrane-spanning segment. The Cytoplasmic segment spans residues 603–634 (YKLIRNYCQKSGDQHGLVNALSTASVNGDLKN). At Ser-627 the chain carries Phosphoserine.

It belongs to the sodium:neurotransmitter symporter (SNF) (TC 2.A.22) family. SLC6A19 subfamily. In terms of assembly, interacts in a tissue-specific manner with ACE2 in small intestine and with CLTRN in the kidney. Interacts with CLTRN; this interaction is required for trafficking of SLC6A19 to the plasma membrane and for its catalytic activation in kidneys. Interacts with ACE2; this interaction is required for trafficking of SLC6A19 to the plasma membrane and for its catalytic activation in intestine. Interacts with ANPEP; the interaction positively regulates its amino acid transporter activity.

The protein localises to the membrane. It catalyses the reaction L-alanine(in) + Na(+)(in) = L-alanine(out) + Na(+)(out). The catalysed reaction is L-cysteine(in) + Na(+)(in) = L-cysteine(out) + Na(+)(out). It carries out the reaction L-glutamine(in) + Na(+)(in) = L-glutamine(out) + Na(+)(out). The enzyme catalyses glycine(in) + Na(+)(in) = glycine(out) + Na(+)(out). It catalyses the reaction L-isoleucine(in) + Na(+)(in) = L-isoleucine(out) + Na(+)(out). The catalysed reaction is L-leucine(in) + Na(+)(in) = L-leucine(out) + Na(+)(out). It carries out the reaction L-methionine(in) + Na(+)(in) = L-methionine(out) + Na(+)(out). The enzyme catalyses L-phenylalanine(in) + Na(+)(in) = L-phenylalanine(out) + Na(+)(out). It catalyses the reaction L-serine(in) + Na(+)(in) = L-serine(out) + Na(+)(out). The catalysed reaction is L-tryptophan(in) + Na(+)(in) = L-tryptophan(out) + Na(+)(out). It carries out the reaction L-tyrosine(in) + Na(+)(in) = L-tyrosine(out) + Na(+)(out). The enzyme catalyses L-valine(in) + Na(+)(in) = L-valine(out) + Na(+)(out). Functionally, transporter that mediates resorption of neutral amino acids across the apical membrane of renal and intestinal epithelial cells. This uptake is sodium-dependent and chloride-independent. Requires CLTRN in kidney or ACE2 in intestine for cell surface expression and amino acid transporter activity. This chain is Sodium-dependent neutral amino acid transporter B(0)AT1, found in Rattus norvegicus (Rat).